A 243-amino-acid polypeptide reads, in one-letter code: Ubiquinone/menaquinone biosynthesis C-methyltransferase UbiE (243 aa).

Residues T69, D90, and 116–117 (DA) contribute to the S-adenosyl-L-methionine site.

This sequence belongs to the class I-like SAM-binding methyltransferase superfamily. MenG/UbiE family.

It catalyses the reaction a 2-demethylmenaquinol + S-adenosyl-L-methionine = a menaquinol + S-adenosyl-L-homocysteine + H(+). It carries out the reaction a 2-methoxy-6-(all-trans-polyprenyl)benzene-1,4-diol + S-adenosyl-L-methionine = a 5-methoxy-2-methyl-3-(all-trans-polyprenyl)benzene-1,4-diol + S-adenosyl-L-homocysteine + H(+). Its pathway is quinol/quinone metabolism; menaquinone biosynthesis; menaquinol from 1,4-dihydroxy-2-naphthoate: step 2/2. It functions in the pathway cofactor biosynthesis; ubiquinone biosynthesis. Functionally, methyltransferase required for the conversion of demethylmenaquinol (DMKH2) to menaquinol (MKH2) and the conversion of 2-polyprenyl-6-methoxy-1,4-benzoquinol (DDMQH2) to 2-polyprenyl-3-methyl-6-methoxy-1,4-benzoquinol (DMQH2). This is Ubiquinone/menaquinone biosynthesis C-methyltransferase UbiE from Ralstonia pickettii (strain 12J).